The sequence spans 65 residues: DNA-directed RNA polymerase subunit Rpo10 (65 aa).

Cys7, Cys10, Cys44, and Cys45 together coordinate Zn(2+).

It belongs to the archaeal Rpo10/eukaryotic RPB10 RNA polymerase subunit family. In terms of assembly, part of the RNA polymerase complex. Zn(2+) is required as a cofactor.

The protein resides in the cytoplasm. The enzyme catalyses RNA(n) + a ribonucleoside 5'-triphosphate = RNA(n+1) + diphosphate. DNA-dependent RNA polymerase (RNAP) catalyzes the transcription of DNA into RNA using the four ribonucleoside triphosphates as substrates. The chain is DNA-directed RNA polymerase subunit Rpo10 from Thermococcus onnurineus (strain NA1).